Here is an 813-residue protein sequence, read N- to C-terminus: Calpain-7 (813 aa).

M1 is subject to N-acetylmethionine. T95 is modified (phosphothreonine). The region spanning 232–540 is the Calpain catalytic domain; it reads RERFAYPMPF…YDVIYLSWNP (309 aa). Residues C290, H458, and N478 contribute to the active site. Residues 541–701 form a domain III region; it reads GLFKESTCIH…INGKWSGQSA (161 aa). A domain N region spans residues 702-813; the sequence is GGCGNFQETH…IIPIKITQLQ (112 aa).

The protein belongs to the peptidase C2 family. As to expression, ubiquitous.

Its subcellular location is the nucleus. In terms of biological role, calcium-regulated non-lysosomal thiol-protease. The protein is Calpain-7 (CAPN7) of Homo sapiens (Human).